A 178-amino-acid chain; its full sequence is UPF0114 protein in repA1-repA2 intergenic region (178 aa).

The next 3 helical transmembrane spans lie at 14–34 (WLIF…TLKF), 53–73 (LILV…LVMV), and 136–156 (WYVI…YIDR).

It belongs to the UPF0114 family.

The protein resides in the cell membrane. The protein is UPF0114 protein in repA1-repA2 intergenic region of Buchnera aphidicola subsp. Tetraneura caerulescens.